The sequence spans 252 residues: Aspartate/glutamate leucyltransferase (252 aa).

This sequence belongs to the R-transferase family. Bpt subfamily.

It is found in the cytoplasm. The enzyme catalyses N-terminal L-glutamyl-[protein] + L-leucyl-tRNA(Leu) = N-terminal L-leucyl-L-glutamyl-[protein] + tRNA(Leu) + H(+). It carries out the reaction N-terminal L-aspartyl-[protein] + L-leucyl-tRNA(Leu) = N-terminal L-leucyl-L-aspartyl-[protein] + tRNA(Leu) + H(+). Its function is as follows. Functions in the N-end rule pathway of protein degradation where it conjugates Leu from its aminoacyl-tRNA to the N-termini of proteins containing an N-terminal aspartate or glutamate. The polypeptide is Aspartate/glutamate leucyltransferase (Xanthomonas campestris pv. campestris (strain B100)).